A 104-amino-acid polypeptide reads, in one-letter code: Acetylcholine receptor subunit alpha (104 aa).

Over 1–104 the chain is Extracellular; the sequence is NPPAIFKSYC…YFIVNVIIPC (104 aa). 2 disulfide bridges follow: C10–C24 and C74–C75. The N-linked (GlcNAc...) asparagine glycan is linked to N23.

Belongs to the ligand-gated ion channel (TC 1.A.9) family. Acetylcholine receptor (TC 1.A.9.1) subfamily. Alpha-1/CHRNA1 sub-subfamily. As to quaternary structure, one of the alpha chains that assemble within the acetylcholine receptor, a pentamer of two alpha chains, a beta, a delta, and a gamma or epsilon chains.

It localises to the postsynaptic cell membrane. The protein localises to the cell membrane. It carries out the reaction K(+)(in) = K(+)(out). It catalyses the reaction Na(+)(in) = Na(+)(out). Functionally, upon acetylcholine binding, the AChR responds by an extensive change in conformation that affects all subunits and leads to opening of an ion-conducting channel across the plasma membrane. The protein is Acetylcholine receptor subunit alpha (CHRNA1) of Naja naja (Indian cobra).